A 65-amino-acid polypeptide reads, in one-letter code: DNA gyrase inhibitor YacG (65 aa).

Zn(2+) is bound by residues cysteine 9, cysteine 12, cysteine 28, and cysteine 32. The disordered stretch occupies residues 44-65; sequence EKRIPSSSDLSESDDWSEEPKQ. A compositionally biased stretch (acidic residues) spans 54–65; that stretch reads SESDDWSEEPKQ.

The protein belongs to the DNA gyrase inhibitor YacG family. Interacts with GyrB. It depends on Zn(2+) as a cofactor.

Functionally, inhibits all the catalytic activities of DNA gyrase by preventing its interaction with DNA. Acts by binding directly to the C-terminal domain of GyrB, which probably disrupts DNA binding by the gyrase. This is DNA gyrase inhibitor YacG from Escherichia coli O6:H1 (strain CFT073 / ATCC 700928 / UPEC).